Here is a 389-residue protein sequence, read N- to C-terminus: 5-hydroxytryptamine receptor 1B (389 aa).

The segment at 1-27 is disordered; that stretch reads MEAAGAPCAPPPPAGSQTGAPPANLSS. Residues 1–45 are Extracellular-facing; the sequence is MEAAGAPCAPPPPAGSQTGAPPANLSSAPHNCSAEGYIYQDSVAL. Polar residues predominate over residues 16–27; the sequence is SQTGAPPANLSS. N-linked (GlcNAc...) asparagine glycosylation is found at N24 and N31. Residues 46-71 form a helical membrane-spanning segment; it reads PWKVLLVILLALITLATTLSNAFVIA. Residues 72–85 lie on the Cytoplasmic side of the membrane; sequence TVYRTRKLHTPANY. A helical transmembrane segment spans residues 86-110; sequence LIASLAVTDLLVSILVMPISTMYTV. The Extracellular segment spans residues 111–118; it reads TGRWTLGQ. Residues 119 to 144 form a helical membrane-spanning segment; that stretch reads VVCDLWLSSDITCCTASILHLCVIAL. A disulfide bridge links C121 with C198. Ergotamine is bound by residues D128 and T133. The DRY motif; important for ligand-induced conformation changes and signaling motif lies at 145–147; sequence DRY. The Cytoplasmic portion of the chain corresponds to 145-164; it reads DRYWAITDAVEYSAKRTPKR. A helical transmembrane segment spans residues 165–183; sequence AAVMIALVWVFSISISLPP. Residues 184-204 lie on the Extracellular side of the membrane; it reads FFWRQAKAEEEVSDCVVNTDH. Residue V200 participates in ergotamine binding. A helical membrane pass occupies residues 205 to 228; sequence ILYTVYSTVGAFYFPTLLLIALYG. Residues 229-314 are Cytoplasmic-facing; it reads RIYVEARSRI…AARERKATKT (86 aa). Residues 258-271 show a composition bias toward polar residues; that stretch reads DSPGSTSSVTSVNS. Residues 258-281 are disordered; it reads DSPGSTSSVTSVNSRAPDVPSESG. A helical membrane pass occupies residues 315-336; sequence LGIILGAFIVCWLPFFIISLVM. Residues 337-346 are Extracellular-facing; that stretch reads PICKDACWFH. The helical transmembrane segment at 347-369 threads the bilayer; the sequence is LAIFDFFTWLGYLNSLINPIIYT. The NPxxY motif; important for ligand-induced conformation changes and signaling motif lies at 364–368; sequence NPIIY. The Cytoplasmic segment spans residues 370–389; it reads MSNEDFKQAFHKLIRFKCAG. The S-palmitoyl cysteine moiety is linked to residue C387.

The protein belongs to the G-protein coupled receptor 1 family. Homodimer. Heterodimer with HTR1D. Post-translationally, phosphorylated. Desensitization of the receptor may be mediated by its phosphorylation. In terms of processing, palmitoylated.

It localises to the cell membrane. Functionally, G-protein coupled receptor for 5-hydroxytryptamine (serotonin). Also functions as a receptor for ergot alkaloid derivatives, various anxiolytic and antidepressant drugs and other psychoactive substances, such as lysergic acid diethylamide (LSD). Ligand binding causes a conformation change that triggers signaling via guanine nucleotide-binding proteins (G proteins) and modulates the activity of downstream effectors, such as adenylate cyclase. HTR1B is coupled to G(i)/G(o) G alpha proteins and mediates inhibitory neurotransmission by inhibiting adenylate cyclase activity. Arrestin family members inhibit signaling via G proteins and mediate activation of alternative signaling pathways. Regulates the release of 5-hydroxytryptamine, dopamine and acetylcholine in the brain, and thereby affects neural activity, nociceptive processing, pain perception, mood and behavior. Besides, plays a role in vasoconstriction of cerebral arteries. This chain is 5-hydroxytryptamine receptor 1B (HTR1B), found in Canis lupus familiaris (Dog).